Consider the following 239-residue polypeptide: MYESIIPFPDETASTVDKYCCSHSTSLPPLFADHAAWTVDKFQTSYMMCCPLQAQMCVFLASDRRARRVLEIGTFTGYSALAWKEGMKAVGGEVWTCEAGPRAIAASKEAFAKYDPEGKIHLVEGPALQTLREINAGPFDIIYVDARKAEYIEYVEIILERHLLAENGIILADDTIHLGLVADRSSTNPHSAREDIEYSLQHADNVYKFNEWAVKHPQLDVLLLPIFNGVTLIKIKSQT.

Residues Glu-71, 73-74 (GT), Ser-79, Glu-98, and Ala-127 each bind S-adenosyl-L-methionine.

It belongs to the class I-like SAM-binding methyltransferase superfamily. Cation-dependent O-methyltransferase family.

It carries out the reaction NK13650 B + S-adenosyl-L-methionine = NK13650 D + S-adenosyl-L-homocysteine + H(+). It functions in the pathway secondary metabolite biosynthesis. Functionally, O-methyltransferase; part of the ank cluster that mediates the biosynthesis of NK13650 C, a highly modified cyclo-arginine-tyrosine dipeptide. AnkF converts NK13650 B to produce NK13650 D via methylation of the C-17 phenol group. Within the pathway, the cyclodipeptide synthase ankA acts as the scaffold-generating enzyme and is responsible for formation of the cyclo-Arg-Tyr diketopiperazine (cRY) from L-Arg and L-Tyr. The ankA product cRY is desaturated by the cytochrome P450 monooxygenase ankB to yield a dehydro-cyclodipeptide intermediate. The FAD-dependent monooxygenase ankC then installs the m-OH, ankD catalyzes the attachment of L-homoserine, and ankE ligates citrate to the ankD product to yield NK13650 B. The O-methyltransferase ankF is responsible for methylation of the C-17 phenol group of NK13650 B to produce NK13650 D. Amidation of NK13650 D with L-Asp by ankG then leads to the production of NK13650 C, whereas amidation of NK13650 B produces NK13650 A. The sequence is that of O-methyltransferase ankF from Aspergillus thermomutatus (Neosartorya pseudofischeri).